The following is a 246-amino-acid chain: MELALATLGNQPLIAAVEVGKHLTWQLGPLSVHGQTMITTWVVMLLLIGLTFIGTRKLQRVPSGLQNFLEYAYDLLASIARNQIGEKQYRSWVPLIGTIFLFVLFANWLGQLPLRLFHIPEGELASPTNDINTTVALSLIALVSYIYAGLRKSGFGYFKHYFESPILAAVWVLEFFTRPLSLSIRLFGNILAEELVVAVLILLVPILVPVPLMILFLLTGAIQALVFSTLTASYVGEAVEDHDDHH.

A run of 5 helical transmembrane segments spans residues 34 to 54, 92 to 112, 130 to 150, 155 to 175, and 196 to 216; these read GQTM…TFIG, WVPL…LGQL, DINT…YAGL, FGYF…VLEF, and VVAV…MILF.

This sequence belongs to the ATPase A chain family. As to quaternary structure, F-type ATPases have 2 components, CF(1) - the catalytic core - and CF(0) - the membrane proton channel. CF(1) has five subunits: alpha(3), beta(3), gamma(1), delta(1), epsilon(1). CF(0) has four main subunits: a, b, b' and c.

It localises to the cell inner membrane. Functionally, key component of the proton channel; it plays a direct role in the translocation of protons across the membrane. This chain is ATP synthase subunit a, found in Gloeobacter violaceus (strain ATCC 29082 / PCC 7421).